Here is a 469-residue protein sequence, read N- to C-terminus: Ribulose bisphosphate carboxylase large chain (469 aa).

An N6,N6,N6-trimethyllysine modification is found at Lys-5. Residues Asn-114 and Thr-164 each coordinate substrate. Catalysis depends on Lys-166, which acts as the Proton acceptor. Residue Lys-168 participates in substrate binding. Mg(2+)-binding residues include Lys-192, Asp-194, and Glu-195. An N6-carboxylysine modification is found at Lys-192. His-285 serves as the catalytic Proton acceptor. 3 residues coordinate substrate: Arg-286, His-318, and Ser-370.

It belongs to the RuBisCO large chain family. Type I subfamily. Heterohexadecamer of 8 large chains and 8 small chains; disulfide-linked. The disulfide link is formed within the large subunit homodimers. Mg(2+) is required as a cofactor. Post-translationally, the disulfide bond which can form in the large chain dimeric partners within the hexadecamer appears to be associated with oxidative stress and protein turnover.

The protein localises to the plastid. It localises to the chloroplast. The enzyme catalyses 2 (2R)-3-phosphoglycerate + 2 H(+) = D-ribulose 1,5-bisphosphate + CO2 + H2O. It catalyses the reaction D-ribulose 1,5-bisphosphate + O2 = 2-phosphoglycolate + (2R)-3-phosphoglycerate + 2 H(+). In terms of biological role, ruBisCO catalyzes two reactions: the carboxylation of D-ribulose 1,5-bisphosphate, the primary event in carbon dioxide fixation, as well as the oxidative fragmentation of the pentose substrate in the photorespiration process. Both reactions occur simultaneously and in competition at the same active site. The protein is Ribulose bisphosphate carboxylase large chain of Calycophyllum candidissimum (Degame lemonwood tree).